Consider the following 103-residue polypeptide: MKNQKIRIRLKAFDYKLIDQSAAEIVDTAKRTGAVVRGPVPLPTRIRRYDVLRSPHVNKTSRDQFEIRTHQRLMDIVDPTDKTVDALMRLDLPAGVDVEIALQ.

It belongs to the universal ribosomal protein uS10 family. As to quaternary structure, part of the 30S ribosomal subunit.

Functionally, involved in the binding of tRNA to the ribosomes. The sequence is that of Small ribosomal subunit protein uS10 from Bordetella avium (strain 197N).